A 356-amino-acid polypeptide reads, in one-letter code: MDAYTARALSVLEGLAISGDPRSHRDPTTEATMSIFAMRFNSTTSRPVMGRPQRGKRGVITSTPQRCGIRDLEHHVAFVMPGYIQNPQTLAILARDEIPYTPSTFRRVQRYVSARMIIQMCERNDMLTPHYEAVTSPGVVLPAPAGGGPRCYAISATTLQIHIDPMQNEVLTPLIFPDQEDVIMAEFIWQRLANGIDNNAVMNMGTNVELLRDNAAVEGGTPFMATPRGIHVVLASYEPVNLCTIHLTCTRYWVTGPPRVVYDSMEADILAVYTYRDGFWDALRSYVLQALGMPAHHYPTRPVTEFRQNLAIAILSRLFDVYSQWRLRSTLQLRPKVLWWLAHRLQAALRAFRLGR.

The N-linked (GlcNAc...) asparagine; by host glycan is linked to Asn-41.

Belongs to the orbivirus VP7 family.

Its subcellular location is the virion. Its function is as follows. The VP7 protein is one of the five proteins (with VP1, VP3, VP4, and VP6) which form the inner capsid of the virus. This chain is Core protein VP7 (Segment-7), found in Broadhaven virus (BRD).